A 428-amino-acid chain; its full sequence is Aerobic C4-dicarboxylate transport protein (428 aa).

A run of 8 helical transmembrane segments spans residues 5-27 (LFKS…GHFY), 47-64 (MIIA…IAGM), 77-99 (ALLY…VNVV), 141-163 (VIGA…FGFA), 184-206 (VIFG…AMAF), 219-241 (LGQL…LGSI), 326-348 (IVHQ…GVTG), and 352-374 (IVLA…LILG).

The protein belongs to the dicarboxylate/amino acid:cation symporter (DAACS) (TC 2.A.23) family.

Its subcellular location is the cell inner membrane. Responsible for the aerobic transport of the dicarboxylates fumarate and malate and to a lesser extent succinate, from the periplasm across the inner membrane. The chain is Aerobic C4-dicarboxylate transport protein from Escherichia coli O157:H7.